A 451-amino-acid chain; its full sequence is UDP-N-acetylmuramoylalanine--D-glutamate ligase (451 aa).

ATP is bound at residue 118–124 (GTKGKST).

The protein belongs to the MurCDEF family.

The protein resides in the cytoplasm. It carries out the reaction UDP-N-acetyl-alpha-D-muramoyl-L-alanine + D-glutamate + ATP = UDP-N-acetyl-alpha-D-muramoyl-L-alanyl-D-glutamate + ADP + phosphate + H(+). It functions in the pathway cell wall biogenesis; peptidoglycan biosynthesis. In terms of biological role, cell wall formation. Catalyzes the addition of glutamate to the nucleotide precursor UDP-N-acetylmuramoyl-L-alanine (UMA). The protein is UDP-N-acetylmuramoylalanine--D-glutamate ligase of Borreliella afzelii (strain PKo) (Borrelia afzelii).